We begin with the raw amino-acid sequence, 243 residues long: Ubiquinone/menaquinone biosynthesis C-methyltransferase UbiE (243 aa).

S-adenosyl-L-methionine contacts are provided by residues Thr-69, Asp-90, and 116-117; that span reads DA.

It belongs to the class I-like SAM-binding methyltransferase superfamily. MenG/UbiE family.

It catalyses the reaction a 2-demethylmenaquinol + S-adenosyl-L-methionine = a menaquinol + S-adenosyl-L-homocysteine + H(+). The catalysed reaction is a 2-methoxy-6-(all-trans-polyprenyl)benzene-1,4-diol + S-adenosyl-L-methionine = a 5-methoxy-2-methyl-3-(all-trans-polyprenyl)benzene-1,4-diol + S-adenosyl-L-homocysteine + H(+). Its pathway is quinol/quinone metabolism; menaquinone biosynthesis; menaquinol from 1,4-dihydroxy-2-naphthoate: step 2/2. The protein operates within cofactor biosynthesis; ubiquinone biosynthesis. Methyltransferase required for the conversion of demethylmenaquinol (DMKH2) to menaquinol (MKH2) and the conversion of 2-polyprenyl-6-methoxy-1,4-benzoquinol (DDMQH2) to 2-polyprenyl-3-methyl-6-methoxy-1,4-benzoquinol (DMQH2). The sequence is that of Ubiquinone/menaquinone biosynthesis C-methyltransferase UbiE from Paraburkholderia xenovorans (strain LB400).